Reading from the N-terminus, the 92-residue chain is Ezrin (92 aa).

An FERM domain is found at 1–72; that stretch reads QLFDQVVKGF…PDFVFYAPRR (72 aa). At K15 the chain carries N6-acetyllysine. An interaction with SCYL3 region spans residues 42–92; the sequence is EIRNISFNDKKFVIKPIDKKAPDFVFYAPRRKPDTIEVQQMKLQDFEQKTK.

As to quaternary structure, interacts with PALS1 and NHERF2. Found in a complex with EZR, PODXL and NHERF2. Interacts with MCC, PLEKHG6, PODXL, SCYL3/PACE1, NHERF1 and TMEM8B. Interacts (when phosphorylated) with FES/FPS. Interacts with dimeric S100P, the interaction may be activating through unmasking of F-actin binding sites. Identified in complexes that contain VIM, EZR, AHNAK, BFSP1, BFSP2, ANK2, PLEC, PRX and spectrin. Detected in a complex composed of at least EZR, AHNAK, PPL and PRX. Interacts with PDPN (via cytoplasmic domain); activates RHOA and promotes epithelial-mesenchymal transition. Interacts with SPN/CD43 cytoplasmic tail, CD44 and ICAM2. Interacts with CLIC5; may work together in a complex which also includes RDX and MYO6 to stabilize linkages between the plasma membrane and subjacent actin cytoskeleton at the base of stereocilia. Post-translationally, phosphorylated by tyrosine-protein kinases. Phosphorylation by ROCK2 suppresses the head-to-tail association of the N-terminal and C-terminal halves resulting in an opened conformation which is capable of actin and membrane-binding. S-nitrosylation is induced by interferon-gamma and oxidatively-modified low-densitity lipoprotein (LDL(ox)) possibly implicating the iNOS-S100A8/9 transnitrosylase complex.

Its subcellular location is the apical cell membrane. The protein resides in the cell projection. The protein localises to the microvillus membrane. It localises to the ruffle membrane. It is found in the cytoplasm. Its subcellular location is the cell cortex. The protein resides in the cytoskeleton. The protein localises to the microvillus. With respect to regulation, a head-to-tail association, of the N-terminal and C-terminal halves results in a closed conformation (inactive form) which is incapable of actin or membrane-binding. In terms of biological role, probably involved in connections of major cytoskeletal structures to the plasma membrane. In epithelial cells, required for the formation of microvilli and membrane ruffles on the apical pole. Along with PLEKHG6, required for normal macropinocytosis. The sequence is that of Ezrin from Mesocricetus auratus (Golden hamster).